The chain runs to 111 residues: Cytochrome b-c1 complex subunit 7 (111 aa).

A2 carries the post-translational modification N-acetylalanine. N6-acetyllysine is present on K19. K78 carries the post-translational modification N6-acetyllysine; alternate. Residue K78 is modified to N6-succinyllysine; alternate. An N6-acetyllysine modification is found at K83. The residue at position 88 (K88) is an N6-acetyllysine; alternate. N6-succinyllysine; alternate is present on K88. K96 carries the N6-acetyllysine modification.

It belongs to the UQCRB/QCR7 family. In terms of assembly, component of the ubiquinol-cytochrome c oxidoreductase (cytochrome b-c1 complex, complex III, CIII), a multisubunit enzyme composed of 11 subunits. The complex is composed of 3 respiratory subunits cytochrome b, cytochrome c1 and Rieske protein UQCRFS1, 2 core protein subunits UQCRC1/QCR1 and UQCRC2/QCR2, and 6 low-molecular weight protein subunits UQCRH/QCR6, UQCRB/QCR7, UQCRQ/QCR8, UQCR10/QCR9, UQCR11/QCR10 and subunit 9, the cleavage product of Rieske protein UQCRFS1. The complex exists as an obligatory dimer and forms supercomplexes (SCs) in the inner mitochondrial membrane with NADH-ubiquinone oxidoreductase (complex I, CI) and cytochrome c oxidase (complex IV, CIV), resulting in different assemblies (supercomplex SCI(1)III(2)IV(1) and megacomplex MCI(2)III(2)IV(2)).

The protein localises to the mitochondrion inner membrane. Its function is as follows. Component of the ubiquinol-cytochrome c oxidoreductase, a multisubunit transmembrane complex that is part of the mitochondrial electron transport chain which drives oxidative phosphorylation. The respiratory chain contains 3 multisubunit complexes succinate dehydrogenase (complex II, CII), ubiquinol-cytochrome c oxidoreductase (cytochrome b-c1 complex, complex III, CIII) and cytochrome c oxidase (complex IV, CIV), that cooperate to transfer electrons derived from NADH and succinate to molecular oxygen, creating an electrochemical gradient over the inner membrane that drives transmembrane transport and the ATP synthase. The cytochrome b-c1 complex catalyzes electron transfer from ubiquinol to cytochrome c, linking this redox reaction to translocation of protons across the mitochondrial inner membrane, with protons being carried across the membrane as hydrogens on the quinol. In the process called Q cycle, 2 protons are consumed from the matrix, 4 protons are released into the intermembrane space and 2 electrons are passed to cytochrome c. The protein is Cytochrome b-c1 complex subunit 7 (UQCRB) of Bos taurus (Bovine).